A 508-amino-acid polypeptide reads, in one-letter code: Anthranilate synthase component 1 (508 aa).

L-tryptophan-binding positions include serine 49 and 282 to 284 (PYM). Residue 317–318 (GT) coordinates chorismate. Glutamate 344 is a binding site for Mg(2+). Residues tyrosine 432, arginine 452, 466–468 (GAG), and glycine 468 each bind chorismate. Glutamate 481 contacts Mg(2+).

Belongs to the anthranilate synthase component I family. Heterotetramer consisting of two non-identical subunits: a beta subunit (TrpG) and a large alpha subunit (TrpE). The cofactor is Mg(2+).

It carries out the reaction chorismate + L-glutamine = anthranilate + pyruvate + L-glutamate + H(+). It functions in the pathway amino-acid biosynthesis; L-tryptophan biosynthesis; L-tryptophan from chorismate: step 1/5. Feedback inhibited by tryptophan. In terms of biological role, part of a heterotetrameric complex that catalyzes the two-step biosynthesis of anthranilate, an intermediate in the biosynthesis of L-tryptophan. In the first step, the glutamine-binding beta subunit (TrpG) of anthranilate synthase (AS) provides the glutamine amidotransferase activity which generates ammonia as a substrate that, along with chorismate, is used in the second step, catalyzed by the large alpha subunit of AS (TrpE) to produce anthranilate. In the absence of TrpG, TrpE can synthesize anthranilate directly from chorismate and high concentrations of ammonia. This chain is Anthranilate synthase component 1 (trpE), found in Geobacillus stearothermophilus (Bacillus stearothermophilus).